Here is a 550-residue protein sequence, read N- to C-terminus: Membrane protein insertase YidC (550 aa).

Residues I3–W23 form a helical membrane-spanning segment. Residues F34–P73 are disordered. Residues P35 to P73 show a composition bias toward low complexity. The next 4 helical transmembrane spans lie at W363 to A383, F429 to L449, P472 to P492, and M503 to L523.

The protein belongs to the OXA1/ALB3/YidC family. Type 1 subfamily. In terms of assembly, interacts with the Sec translocase complex via SecD. Specifically interacts with transmembrane segments of nascent integral membrane proteins during membrane integration.

It localises to the cell inner membrane. Functionally, required for the insertion and/or proper folding and/or complex formation of integral membrane proteins into the membrane. Involved in integration of membrane proteins that insert both dependently and independently of the Sec translocase complex, as well as at least some lipoproteins. Aids folding of multispanning membrane proteins. This chain is Membrane protein insertase YidC, found in Paraburkholderia phymatum (strain DSM 17167 / CIP 108236 / LMG 21445 / STM815) (Burkholderia phymatum).